A 149-amino-acid chain; its full sequence is MNVFLSKYVNGVDKKSRVSVPANYRAVLGKELFNGVIAYPSIRNDCIEVCGISHIEKLRQMIETLDPYSEERDAFETMIFGEAVQLSFDGEGRVILPQSLMKHAGIEEQACFVGKGVIFEIWQPQNFEKYLNSAQKIAHEKRLTLRNAN.

SpoVT-AbrB domains follow at residues Lys7–His54 and Ala83–Asn126.

Belongs to the MraZ family. In terms of assembly, forms oligomers.

It is found in the cytoplasm. It localises to the nucleoid. In Rickettsia felis (strain ATCC VR-1525 / URRWXCal2) (Rickettsia azadi), this protein is Transcriptional regulator MraZ.